The primary structure comprises 226 residues: V-type proton ATPase subunit E (226 aa).

It belongs to the V-ATPase E subunit family. V-ATPase is a heteromultimeric enzyme made up of two complexes: the ATP-hydrolytic V1 complex and the proton translocation V0 complex. The V1 complex consists of three catalytic AB heterodimers that form a heterohexamer, three peripheral stalks each consisting of EG heterodimers, one central rotor including subunits D and F, and the regulatory subunits C and H. The proton translocation complex V0 consists of the proton transport subunit a, a ring of proteolipid subunits c9c'', rotary subunit d, subunits e and f, and the accessory subunits VhaAC45 and ATP6AP2.

Its function is as follows. Subunit of the V1 complex of vacuolar(H+)-ATPase (V-ATPase), a multisubunit enzyme composed of a peripheral complex (V1) that hydrolyzes ATP and a membrane integral complex (V0) that translocates protons. V-ATPase is responsible for acidifying and maintaining the pH of intracellular compartments and in some cell types, is targeted to the plasma membrane, where it is responsible for acidifying the extracellular environment. The chain is V-type proton ATPase subunit E (Vha26) from Drosophila melanogaster (Fruit fly).